Reading from the N-terminus, the 590-residue chain is Protein NRT1/ PTR FAMILY 6.3 (590 aa).

The next 2 helical transmembrane spans lie at 46–66 (LTTLGIGVNLVTYLTGTMHLG) and 77–97 (FLGTSFMLCLLGGFIADTFLG). T101 carries the phosphothreonine; by CIPK23 modification. 10 helical membrane-spanning segments follow: residues 102 to 122 (IAIFAAIQATGVSILTLSTII), 143 to 163 (GIQLTVLYLALYLTALGTGGV), 193 to 213 (FFFCINVGSLLAVTVLVYVQD), 219 to 239 (WGYGICAFAIVLALSVFLAGT), 342 to 362 (MLPIWATCILFWTVHAQLTTL), 374 to 394 (IGSFEIPPASMAVFYVGGLLL), 423 to 443 (IGLGLFFGSMAMAVAALVELK), 460 to 480 (LGFYLLIPQYLIVGIGEALIY), 501 to 521 (GLLLSTLALGFFFSSVLVTIV), and 542 to 562 (YNFYWLVAVLVALNFLIFLVF). Substrate is bound by residues H356 and T360.

It belongs to the major facilitator superfamily. Proton-dependent oligopeptide transporter (POT/PTR) (TC 2.A.17) family. Monomer and homodimer. The dimer has the 2 monomers in the same orientation. Interacts with CIPK23. Post-translationally, acts as a high-affinity nitrate transporter when phosphorylated and as a low-affinity transporter when dephosphorylated. Forms homodimer when unphosphorylated and monomer when phosphorylated. Low nitrogen concentration in the medium stimulates phosphorylation. Phosphorylation also regulates the nitrate signaling. Expressed in the stele in lateral root primordia before emergence and in the tip of primary and emerged lateral roots. Detected in emerging and immature leaves, guard cells, flower buds, style, stigma, anthers and pollen grains. Not detected in the shoot apical meristem.

The protein localises to the membrane. Functionally, dual affinity nitrate transporter. Involved in proton-dependent nitrate uptake and in the regulation of the nitrate transporter NRT2.1. Also acts as a nitrate sensor that trigger a specific signaling pathway stimulating lateral root growth and seed germination. The uptake activity is not required for sensor function. Displays an auxin transport facilitation inhibited by high nitrate concentration. Required to prevent auxin accumulation in preemerged lateral root primordia and young lateral roots when external nitrate concentration is low or null. May be involved in the basipetal transport of auxin out of the lateral root tips. Acts as a bidirectional transporter involved in root-to-shoot nitrate translocation. Recognizes specifically nitrate and chlorate, but not nitrite, alanine, sulfate, phosphate or the di-peptide Ala-Ala. In Arabidopsis thaliana (Mouse-ear cress), this protein is Protein NRT1/ PTR FAMILY 6.3 (NPF6.3).